Reading from the N-terminus, the 101-residue chain is Protein PIP-1 (101 aa).

Positions 1–23 are cleaved as a signal peptide; that stretch reads MGKCLLLPLLLVVLSSLLGFPQA. Positions 24 to 101 constitute a UPAR/Ly6 domain; the sequence is LECFQCQRVS…CHDSPFCNKF (78 aa). Intrachain disulfides connect Cys26-Cys53, Cys29-Cys38, Cys45-Cys71, Cys75-Cys91, and Cys92-Cys98. N-linked (GlcNAc...) asparagine glycosylation occurs at Asn84.

It localises to the secreted. In Sus scrofa (Pig), this protein is Protein PIP-1.